The sequence spans 107 residues: uncharacterized protein (107 aa).

Residues 34–107 (FASKDKKDEK…SDNQKKDMSY (74 aa)) adopt a coiled-coil conformation.

This is an uncharacterized protein from Dictyostelium discoideum (Social amoeba).